The following is a 319-amino-acid chain: Transaldolase (319 aa).

The active-site Schiff-base intermediate with substrate is Lys-125.

This sequence belongs to the transaldolase family. Type 1 subfamily. As to quaternary structure, homodimer.

It is found in the cytoplasm. It carries out the reaction D-sedoheptulose 7-phosphate + D-glyceraldehyde 3-phosphate = D-erythrose 4-phosphate + beta-D-fructose 6-phosphate. It functions in the pathway carbohydrate degradation; pentose phosphate pathway; D-glyceraldehyde 3-phosphate and beta-D-fructose 6-phosphate from D-ribose 5-phosphate and D-xylulose 5-phosphate (non-oxidative stage): step 2/3. Transaldolase is important for the balance of metabolites in the pentose-phosphate pathway. The polypeptide is Transaldolase (Ralstonia nicotianae (strain ATCC BAA-1114 / GMI1000) (Ralstonia solanacearum)).